The sequence spans 730 residues: 1,4-alpha-glucan branching enzyme GlgB (730 aa).

The active-site Nucleophile is the aspartate 405. Glutamate 458 acts as the Proton donor in catalysis.

It belongs to the glycosyl hydrolase 13 family. GlgB subfamily. As to quaternary structure, monomer.

The enzyme catalyses Transfers a segment of a (1-&gt;4)-alpha-D-glucan chain to a primary hydroxy group in a similar glucan chain.. The protein operates within glycan biosynthesis; glycogen biosynthesis. Functionally, catalyzes the formation of the alpha-1,6-glucosidic linkages in glycogen by scission of a 1,4-alpha-linked oligosaccharide from growing alpha-1,4-glucan chains and the subsequent attachment of the oligosaccharide to the alpha-1,6 position. This Haemophilus influenzae (strain 86-028NP) protein is 1,4-alpha-glucan branching enzyme GlgB.